A 739-amino-acid chain; its full sequence is Trehalose phosphorylase (739 aa).

The propeptide occupies 1–26; it reads MSTPHHQFESKSSTAIRRRLSSSVSS. Residues 1 to 28 form a disordered region; sequence MSTPHHQFESKSSTAIRRRLSSSVSSKQ.

Belongs to the glycosyltransferase group 1 family. Glycosyltransferase 4 subfamily. As to quaternary structure, homodimer.

The catalysed reaction is alpha,alpha-trehalose + phosphate = alpha-D-glucose + alpha-D-glucose 1-phosphate. Functionally, reversibly catalyzes the synthesis and degradation of trehalose from glucose and alpha-D-glucose 1-phosphate. The equilibrium lies in the direction of trehalose synthesis. This chain is Trehalose phosphorylase, found in Pleurotus pulmonarius (Indian oyster mushroom).